The following is a 1301-amino-acid chain: DNA-directed RNA polymerase subunit beta (1301 aa).

The protein belongs to the RNA polymerase beta chain family. As to quaternary structure, the RNAP catalytic core consists of 2 alpha, 1 beta, 1 beta' and 1 omega subunit. When a sigma factor is associated with the core the holoenzyme is formed, which can initiate transcription.

It catalyses the reaction RNA(n) + a ribonucleoside 5'-triphosphate = RNA(n+1) + diphosphate. In terms of biological role, DNA-dependent RNA polymerase catalyzes the transcription of DNA into RNA using the four ribonucleoside triphosphates as substrates. In Chlorobium luteolum (strain DSM 273 / BCRC 81028 / 2530) (Pelodictyon luteolum), this protein is DNA-directed RNA polymerase subunit beta.